The chain runs to 352 residues: uncharacterized protein (352 aa).

This is an uncharacterized protein from Frog virus 3 (isolate Goorha) (FV-3).